The sequence spans 748 residues: Photosystem I P700 chlorophyll a apoprotein A1 (748 aa).

8 consecutive transmembrane segments (helical) span residues 69 to 92, 155 to 178, 194 to 218, 290 to 308, 345 to 368, 384 to 410, 432 to 454, and 529 to 547; these read IFSA…FHGA, LYVT…FHYH, LNHH…HVSL, VAHH…GHMY, WHAN…HHMY, LSLF…IYMV, AIIS…LYIH, and FMVH…LILL. 2 residues coordinate [4Fe-4S] cluster: Cys571 and Cys580. 2 helical membrane-spanning segments follow: residues 587–608 and 662–684; these read HVFL…HFSW and LSAY…MFLF. Residue His673 participates in chlorophyll a' binding. Chlorophyll a-binding residues include Met681 and Tyr689. Trp690 is a phylloquinone binding site. Residues 722–742 form a helical membrane-spanning segment; it reads AVGVAHYLLGGIATTWAFFLA.

Belongs to the PsaA/PsaB family. The PsaA/B heterodimer binds the P700 chlorophyll special pair and subsequent electron acceptors. PSI consists of a core antenna complex that captures photons, and an electron transfer chain that converts photonic excitation into a charge separation. The eukaryotic PSI reaction center is composed of at least 11 subunits. Requires P700 is a chlorophyll a/chlorophyll a' dimer, A0 is one or more chlorophyll a, A1 is one or both phylloquinones and FX is a shared 4Fe-4S iron-sulfur center. as cofactor.

It localises to the plastid. Its subcellular location is the chloroplast thylakoid membrane. The enzyme catalyses reduced [plastocyanin] + hnu + oxidized [2Fe-2S]-[ferredoxin] = oxidized [plastocyanin] + reduced [2Fe-2S]-[ferredoxin]. Functionally, psaA and PsaB bind P700, the primary electron donor of photosystem I (PSI), as well as the electron acceptors A0, A1 and FX. PSI is a plastocyanin/cytochrome c6-ferredoxin oxidoreductase, converting photonic excitation into a charge separation, which transfers an electron from the donor P700 chlorophyll pair to the spectroscopically characterized acceptors A0, A1, FX, FA and FB in turn. Oxidized P700 is reduced on the lumenal side of the thylakoid membrane by plastocyanin or cytochrome c6. In Cyanidioschyzon merolae (strain NIES-3377 / 10D) (Unicellular red alga), this protein is Photosystem I P700 chlorophyll a apoprotein A1.